The primary structure comprises 420 residues: MVPGPRPALLLLLFLLQAFLLWDSPVAASIQEQYCESLLPTTNHTGPQCNASVDLIGTCWPRSAVGQLVARPCPEYFYGVRYNTTNNGYRECLANGSWAARVNYSQCQEILSEEKRSKLHYHIAVIINYLGHCVSLGTLLVAFVLFMRLRSIRCLRNIIHWNLITAFILRNATWFVVQLTMNPEVHESNVVWCRLVTAAYNYFHVTNFFWMFGEGCYLHTAIVLTYSTDKLRKWMFICIGWCIPFPIIVAWAIGKLYYDNEKCWFGKRAGVYTDYIYQGPMILVLLINFIFLFNIVRILMTKLRASTTSETIQYRKAVKATLVLLSLLGITYMLFFVNPGEDEISRIVFIYFNSFLESFQGFFVSVFYCFLNSEVRSAVRKRWHRWQDKHSIRARVARAMSIPTSPTRVSFHSIKQSSAV.

The N-terminal stretch at 1–28 (MVPGPRPALLLLLFLLQAFLLWDSPVAA) is a signal peptide. At 29-116 (SIQEQYCESL…CQEILSEEKR (88 aa)) the chain is on the extracellular side. 3 disulfide bridges follow: C35-C59, C49-C92, and C73-C107. Residues N43, N50, N83, N95, and N103 are each glycosylated (N-linked (GlcNAc...) asparagine). Residues 117-147 (SKLHYHIAVIINYLGHCVSLGTLLVAFVLFM) traverse the membrane as a helical segment. The Cytoplasmic portion of the chain corresponds to 148 to 154 (RLRSIRC). The chain crosses the membrane as a helical span at residues 155 to 179 (LRNIIHWNLITAFILRNATWFVVQL). At 180–194 (TMNPEVHESNVVWCR) the chain is on the extracellular side. Cysteines 193 and 263 form a disulfide. Residues 195–223 (LVTAAYNYFHVTNFFWMFGEGCYLHTAIV) traverse the membrane as a helical segment. The Cytoplasmic segment spans residues 224–230 (LTYSTDK). Residues 231 to 258 (LRKWMFICIGWCIPFPIIVAWAIGKLYY) traverse the membrane as a helical segment. At 259 to 274 (DNEKCWFGKRAGVYTD) the chain is on the extracellular side. A helical membrane pass occupies residues 275 to 300 (YIYQGPMILVLLINFIFLFNIVRILM). The Cytoplasmic segment spans residues 301 to 311 (TKLRASTTSET). A helical membrane pass occupies residues 312 to 336 (IQYRKAVKATLVLLSLLGITYMLFF). Residues 337 to 343 (VNPGEDE) are Extracellular-facing. Residues 344 to 373 (ISRIVFIYFNSFLESFQGFFVSVFYCFLNS) traverse the membrane as a helical segment. The Cytoplasmic portion of the chain corresponds to 374 to 420 (EVRSAVRKRWHRWQDKHSIRARVARAMSIPTSPTRVSFHSIKQSSAV).

The protein belongs to the G-protein coupled receptor 2 family. In terms of assembly, interacts (via N-terminal extracellular domain) with CRF and UCN.

The protein localises to the cell membrane. Its function is as follows. G-protein coupled receptor for CRH (corticotropin-releasing factor) and UCN (urocortin). Has high affinity for CRH and UCN. Ligand binding causes a conformation change that triggers signaling via guanine nucleotide-binding proteins (G proteins) and down-stream effectors, such as adenylate cyclase. Promotes the activation of adenylate cyclase, leading to increased intracellular cAMP levels. The sequence is that of Corticotropin-releasing factor receptor 1 (CRHR1) from Gallus gallus (Chicken).